The chain runs to 463 residues: Sugar transporter ERD6-like 7 (463 aa).

Helical transmembrane passes span 26–46 (WMVY…GSCA), 69–89 (LFGS…GPIA), 103–123 (AFCV…ALDL), 126–146 (LATG…IAEI), 157–177 (TLNQ…GTLV), 181–201 (VLAL…FFIP), 264–284 (VLIA…GICF), 299–319 (LGMI…APIV), 327–347 (LLLV…VSFY), 357–377 (AVPV…SAGM), 396–416 (VAGG…SYTF), and 426–446 (GTFL…IAIV).

This sequence belongs to the major facilitator superfamily. Sugar transporter (TC 2.A.1.1) family.

The protein localises to the membrane. In terms of biological role, sugar transporter. The protein is Sugar transporter ERD6-like 7 of Arabidopsis thaliana (Mouse-ear cress).